A 92-amino-acid chain; its full sequence is UPF0223 protein SUB0967 (92 aa).

It belongs to the UPF0223 family.

This chain is UPF0223 protein SUB0967, found in Streptococcus uberis (strain ATCC BAA-854 / 0140J).